A 106-amino-acid chain; its full sequence is Protein U4 (106 aa).

The helical transmembrane segment at 5 to 25 (FFISIILFVVLLNPSLIINMV) threads the bilayer.

It belongs to the nanovirus U4 protein family.

It is found in the membrane. This is Protein U4 (DNA-U4) from Cicer arietinum (Chickpea).